Reading from the N-terminus, the 323-residue chain is tRNA dimethylallyltransferase (323 aa).

12-19 is an ATP binding site; that stretch reads GPTAAGKT. 14-19 serves as a coordination point for substrate; sequence TAAGKT. Interaction with substrate tRNA regions lie at residues 37–40 and 161–165; these read DSAL and QRLIR.

The protein belongs to the IPP transferase family. In terms of assembly, monomer. Mg(2+) serves as cofactor.

It carries out the reaction adenosine(37) in tRNA + dimethylallyl diphosphate = N(6)-dimethylallyladenosine(37) in tRNA + diphosphate. Functionally, catalyzes the transfer of a dimethylallyl group onto the adenine at position 37 in tRNAs that read codons beginning with uridine, leading to the formation of N6-(dimethylallyl)adenosine (i(6)A). The sequence is that of tRNA dimethylallyltransferase from Pseudomonas putida (strain ATCC 47054 / DSM 6125 / CFBP 8728 / NCIMB 11950 / KT2440).